A 172-amino-acid polypeptide reads, in one-letter code: Adenine phosphoribosyltransferase (172 aa).

This sequence belongs to the purine/pyrimidine phosphoribosyltransferase family. As to quaternary structure, homodimer.

The protein localises to the cytoplasm. The enzyme catalyses AMP + diphosphate = 5-phospho-alpha-D-ribose 1-diphosphate + adenine. It functions in the pathway purine metabolism; AMP biosynthesis via salvage pathway; AMP from adenine: step 1/1. Functionally, catalyzes a salvage reaction resulting in the formation of AMP, that is energically less costly than de novo synthesis. The sequence is that of Adenine phosphoribosyltransferase from Staphylococcus saprophyticus subsp. saprophyticus (strain ATCC 15305 / DSM 20229 / NCIMB 8711 / NCTC 7292 / S-41).